A 305-amino-acid polypeptide reads, in one-letter code: Syntaxin-112 (305 aa).

Residue Met-1 is modified to N-acetylmethionine. Residues 52–119 (QEIETIKTLI…TLIETLEKRN (68 aa)) are a coiled coil. The region spanning 210–272 (DLKTKERHEA…SGGTNSLYYA (63 aa)) is the t-SNARE coiled-coil homology domain.

The protein belongs to the syntaxin family. Part of the t-SNARE complex.

Functionally, vesicle trafficking protein that functions in the secretory pathway. This Arabidopsis thaliana (Mouse-ear cress) protein is Syntaxin-112 (SYP112).